The following is a 122-amino-acid chain: Phospholipase A2 crotoxin basic chain (122 aa).

7 disulfide bridges follow: cysteine 26-cysteine 115, cysteine 28-cysteine 44, cysteine 43-cysteine 95, cysteine 49-cysteine 122, cysteine 50-cysteine 88, cysteine 57-cysteine 81, and cysteine 75-cysteine 86. Residues tyrosine 27, glycine 29, and glycine 31 each coordinate Ca(2+). The active site involves histidine 47. Aspartate 48 contributes to the Ca(2+) binding site. The active site involves aspartate 89.

In terms of assembly, heterodimer of one acidic (CA also named crotapotin) and one basic (CB) subunits; non-covalently linked. It depends on Ca(2+) as a cofactor. As to expression, expressed by the venom gland.

The protein localises to the secreted. The enzyme catalyses a 1,2-diacyl-sn-glycero-3-phosphocholine + H2O = a 1-acyl-sn-glycero-3-phosphocholine + a fatty acid + H(+). In terms of biological role, heterodimer CA-CB: Crotoxin is a potent presynaptic neurotoxin that possesses phospholipase A2 (PLA2) activity and exerts a lethal action by blocking neuromuscular transmission. It consists of a non-covalent association of a basic and weakly toxic PLA2 subunit (CB), with a small acidic, non-enzymatic and non-toxic subunit (CA also named crotapotin). The complex acts by binding to a specific 48-kDa protein (R48) receptor located on presynaptic membranes, forming a transient ternary complex CA-CB-R48, followed by dissociation of the CA-CB complex and release of the CA subunit. At equilibrium, only the CB subunits remain associated with the specific crotoxin receptor. In addition to neurotoxicity, crotoxin has been found to exert nephrotoxicity, and cardiovascular toxicity. Moreover, anti-inflammatory, immunomodulatory, anti-tumor and analgesic effects of crotoxin have also been reported. Monomer CB: The basic subunit of crotoxin is a snake venom phospholipase A2 (PLA2) that exhibits weak neurotoxicity and strong anticoagulant effects by binding to factor Xa (F10) and inhibiting the prothrombinase activity. In addition, it exerts myotoxicity, nephrotoxicity, and cardiovascular toxicity as well as anti-inflammatory, immunomodulatory, anti-tumor and analgesic effects. Also shows a strong antimicrobial activity against X.axonopodis passiforae (Gram-negative) which is completely dependent on the enzymatic activity. PLA2 catalyzes the calcium-dependent hydrolysis of the 2- acyl groups in 3-sn-phosphoglycerides. In Crotalus durissus collilineatus (Brazilian rattlesnake), this protein is Phospholipase A2 crotoxin basic chain.